Reading from the N-terminus, the 187-residue chain is Shikimate kinase (187 aa).

19-24 (GSGKST) contributes to the ATP binding site. Serine 23 is a binding site for Mg(2+). Substrate contacts are provided by aspartate 41, arginine 65, and glycine 87. An ATP-binding site is contributed by arginine 124. Residue arginine 143 coordinates substrate. An ATP-binding site is contributed by arginine 160.

Belongs to the shikimate kinase family. Monomer. Requires Mg(2+) as cofactor.

Its subcellular location is the cytoplasm. The catalysed reaction is shikimate + ATP = 3-phosphoshikimate + ADP + H(+). It functions in the pathway metabolic intermediate biosynthesis; chorismate biosynthesis; chorismate from D-erythrose 4-phosphate and phosphoenolpyruvate: step 5/7. Catalyzes the specific phosphorylation of the 3-hydroxyl group of shikimic acid using ATP as a cosubstrate. This Rippkaea orientalis (strain PCC 8801 / RF-1) (Cyanothece sp. (strain PCC 8801)) protein is Shikimate kinase.